Here is a 246-residue protein sequence, read N- to C-terminus: 1-(5-phosphoribosyl)-5-[(5-phosphoribosylamino)methylideneamino] imidazole-4-carboxamide isomerase (246 aa).

The active-site Proton acceptor is the Asp8. The Proton donor role is filled by Asp131.

The protein belongs to the HisA/HisF family.

Its subcellular location is the cytoplasm. It catalyses the reaction 1-(5-phospho-beta-D-ribosyl)-5-[(5-phospho-beta-D-ribosylamino)methylideneamino]imidazole-4-carboxamide = 5-[(5-phospho-1-deoxy-D-ribulos-1-ylimino)methylamino]-1-(5-phospho-beta-D-ribosyl)imidazole-4-carboxamide. It functions in the pathway amino-acid biosynthesis; L-histidine biosynthesis; L-histidine from 5-phospho-alpha-D-ribose 1-diphosphate: step 4/9. The chain is 1-(5-phosphoribosyl)-5-[(5-phosphoribosylamino)methylideneamino] imidazole-4-carboxamide isomerase from Bordetella bronchiseptica (strain ATCC BAA-588 / NCTC 13252 / RB50) (Alcaligenes bronchisepticus).